A 402-amino-acid chain; its full sequence is Tyrosine-protein kinase transforming protein ros (402 aa).

Residues 98–377 (LNLHKLLGSG…KLQEIRHSPL (280 aa)) enclose the Protein kinase domain. Residues 104-112 (LGSGAFGEV) and K133 each bind ATP. D232 functions as the Proton acceptor in the catalytic mechanism. Y268 is modified (phosphotyrosine; by autocatalysis).

This sequence belongs to the protein kinase superfamily. Tyr protein kinase family. Insulin receptor subfamily.

The enzyme catalyses L-tyrosyl-[protein] + ATP = O-phospho-L-tyrosyl-[protein] + ADP + H(+). The protein is Tyrosine-protein kinase transforming protein ros (V-ROS) of Galliformes (UR2SV).